The sequence spans 228 residues: UPF0758 protein CKR_0778 (228 aa).

The region spanning 106–228 (RICSPQDAAV…FISLKEKGIL (123 aa)) is the MPN domain. Positions 177, 179, and 190 each coordinate Zn(2+). The JAMM motif motif lies at 177–190 (HNHPSGDPSPSNED).

This sequence belongs to the UPF0758 family.

The polypeptide is UPF0758 protein CKR_0778 (Clostridium kluyveri (strain NBRC 12016)).